We begin with the raw amino-acid sequence, 37 residues long: Potassium channel toxin alpha-KTx 15.3 (37 aa).

The residue at position 1 (Q1) is a Pyrrolidone carboxylic acid. Intrachain disulfides connect C8–C28, C13–C33, and C17–C35.

Expressed by the venom gland.

The protein localises to the secreted. Inhibits A-type (Kv4) voltage-gated potassium channels of striated neurons (Ki=131 nM), probably by acting as a pore blocker. Has also been shown to block ERG1/Kv11.1/KCNH2 potassium channels (IC(50)=7.9 uM). The presence of the Kv4-associated proteins DPP6 or DPP10 is mandatory to have high-affinity blockade of Kv4.2/KCND2 and Kv4.3/KCND3 channels (80-90% inhibition at 500 nM of toxin). In contrast, the presence of the Kv4-associated protein KChIP1/KCNIP1 does not enhance the affinity blockade (only 40% inhibition at 500 nM). In adult rat brain, the toxin binds to sites in the striatum, and cerebellum. It shares the same target in rat brain than AaTX1 (AC Q867F4) and BmTX3 (AC Q8I0L5). In DPP6 knockout mice, A-type currents are about 20-fold less affected by the toxin. In rodent models of Parkinson's disease, the toxin reduces motor symptoms and emotional and cognitive symptoms. In Androctonus mauritanicus mauritanicus (Scorpion), this protein is Potassium channel toxin alpha-KTx 15.3.